The sequence spans 617 residues: V-type proton ATPase catalytic subunit A (617 aa).

Position 250–257 (250–257) interacts with ATP; sequence GAFGCGKT.

It belongs to the ATPase alpha/beta chains family. In terms of assembly, V-ATPase is a heteromultimeric enzyme made up of two complexes: the ATP-hydrolytic V1 complex and the proton translocation V0 complex. The V1 complex consists of three catalytic AB heterodimers that form a heterohexamer, three peripheral stalks each consisting of EG heterodimers, one central rotor including subunits D and F, and the regulatory subunits C and H. The proton translocation complex V0 consists of the proton transport subunit a, a ring of proteolipid subunits c9c'', rotary subunit d, subunits e and f, and the accessory subunits VhaAC45 and ATP6AP2.

It catalyses the reaction ATP + H2O + 4 H(+)(in) = ADP + phosphate + 5 H(+)(out). Its activity is regulated as follows. ATP hydrolysis occurs at the interface between the nucleotide-binding domains of subunits A and B. ATP hydrolysis triggers a conformational change in the subunits D and F, which induces a shift of subunit d. The c-ring is subsequently rotated and results in a continuous proton translocation across the membrane. Catalytic subunit of the V1 complex of vacuolar(H+)-ATPase (V-ATPase), a multisubunit enzyme composed of a peripheral complex (V1) that hydrolyzes ATP and a membrane integral complex (V0) that translocates protons. V-ATPase is responsible for acidifying and maintaining the pH of intracellular compartments and in some cell types, is targeted to the plasma membrane, where it is responsible for acidifying the extracellular environment. The sequence is that of V-type proton ATPase catalytic subunit A (VHAA) from Manduca sexta (Tobacco hawkmoth).